Here is a 566-residue protein sequence, read N- to C-terminus: Phenylalanine--tRNA ligase beta subunit (566 aa).

One can recognise a B5 domain in the interval 287–362; it reads YFQEEVEFNV…IGEGLSSFNP (76 aa). Residues aspartate 340, aspartate 346, glutamate 349, and aspartate 350 each contribute to the Mg(2+) site.

The protein belongs to the phenylalanyl-tRNA synthetase beta subunit family. Type 2 subfamily. Tetramer of two alpha and two beta subunits. Requires Mg(2+) as cofactor.

It is found in the cytoplasm. It catalyses the reaction tRNA(Phe) + L-phenylalanine + ATP = L-phenylalanyl-tRNA(Phe) + AMP + diphosphate + H(+). The chain is Phenylalanine--tRNA ligase beta subunit from Borreliella burgdorferi (strain ATCC 35210 / DSM 4680 / CIP 102532 / B31) (Borrelia burgdorferi).